The sequence spans 428 residues: Enolase (428 aa).

Residue glutamine 163 participates in (2R)-2-phosphoglycerate binding. The active-site Proton donor is the glutamate 205. Residues aspartate 242, glutamate 285, and aspartate 311 each coordinate Mg(2+). (2R)-2-phosphoglycerate-binding residues include lysine 336, arginine 365, serine 366, and lysine 387. The active-site Proton acceptor is the lysine 336.

Belongs to the enolase family. The cofactor is Mg(2+).

It localises to the cytoplasm. The protein localises to the secreted. It is found in the cell surface. It carries out the reaction (2R)-2-phosphoglycerate = phosphoenolpyruvate + H2O. Its pathway is carbohydrate degradation; glycolysis; pyruvate from D-glyceraldehyde 3-phosphate: step 4/5. Catalyzes the reversible conversion of 2-phosphoglycerate (2-PG) into phosphoenolpyruvate (PEP). It is essential for the degradation of carbohydrates via glycolysis. The chain is Enolase from Desulfatibacillum aliphaticivorans.